A 630-amino-acid polypeptide reads, in one-letter code: Putative adenylate cyclase regulatory protein (630 aa).

The RING-type zinc finger occupies 10 to 46 (CAVCREPWAEGALELFPCRHVFCTVCVVERWRCPSCQ). 18 LRR repeats span residues 184 to 206 (FLVHLEVDGSRGVTDITGLCRLK), 207 to 230 (TLEALSLDSCINITKGFDKICALP), 231 to 251 (QLTSLSLCQTNVTDKDLRCIH), 255 to 277 (KLKVLRYSSCHEITDLTAIGGMR), 278 to 301 (SLEKLSLSGCWNVTKGLEELCKFS), 302 to 324 (NLRELDISGCLVLGSAVVLKNLI), 325 to 347 (NLKVLSVSNCKNFKDLNGLERLV), 348 to 370 (NLDKLNLSGCHGVSSLGFVANLS), 371 to 393 (NLKELDISGCESLVCFDGLQDLN), 394 to 416 (NLEVLYLRDVKSFTNVGAIKNLS), 417 to 439 (KMRELDLSGCERITSLSGLETLK), 440 to 462 (GLEELSLEGCGEIMSFDPIWSLH), 463 to 485 (HLRVLYVSECGNLEDLSGLEGIT), 486 to 508 (GLEELYLHGCRKCTNFGPIWNLR), 509 to 531 (NVCVVELSCCENLEDLSGLQCLT), 532 to 554 (GLEELYLIGCEEITPIGVVGNLR), 555 to 577 (NLKCLSTCWCANLKELGGLDRLV), and 578 to 599 (NLEKLDLSGCCGLSSSVFMELM).

Its function is as follows. May interact with adenylate cyclase to regulate its activity. Functionally, may be involved in the postranscriptional regulation of genes in VSG expression sites. The sequence is that of Putative adenylate cyclase regulatory protein (ESAG8C) from Trypanosoma equiperdum.